Reading from the N-terminus, the 128-residue chain is Probable 4-amino-4-deoxy-L-arabinose-phosphoundecaprenol flippase subunit ArnF (128 aa).

Topologically, residues 1-2 (MG) are cytoplasmic. The chain crosses the membrane as a helical span at residues 3-23 (LMWGLFSVIIASVAQLSLGFA). Residues 24–35 (ASHLPPMTHLWD) lie on the Periplasmic side of the membrane. The helical transmembrane segment at 36–56 (FIAALLAFGLDARILLLGLLG) threads the bilayer. The Cytoplasmic portion of the chain corresponds to 57–76 (YLLSVFCWYKTLHKLALSKA). A helical transmembrane segment spans residues 77–97 (YALLSMSYVLVWIASMVLPGW). Topologically, residues 98-100 (EGT) are periplasmic. Residues 101-121 (FSLKALLGVACIMSGLMLIFL) form a helical membrane-spanning segment. Residues 122–128 (PMTKQRY) are Cytoplasmic-facing.

The protein belongs to the ArnF family. In terms of assembly, heterodimer of ArnE and ArnF.

The protein localises to the cell inner membrane. It participates in bacterial outer membrane biogenesis; lipopolysaccharide biosynthesis. In terms of biological role, translocates 4-amino-4-deoxy-L-arabinose-phosphoundecaprenol (alpha-L-Ara4N-phosphoundecaprenol) from the cytoplasmic to the periplasmic side of the inner membrane. This Escherichia coli (strain 55989 / EAEC) protein is Probable 4-amino-4-deoxy-L-arabinose-phosphoundecaprenol flippase subunit ArnF.